A 151-amino-acid polypeptide reads, in one-letter code: Deoxyuridine 5'-triphosphate nucleotidohydrolase (151 aa).

Substrate-binding positions include 70-72, N83, 87-89, and M97; these read RSG and LID.

This sequence belongs to the dUTPase family. The cofactor is Mg(2+).

It carries out the reaction dUTP + H2O = dUMP + diphosphate + H(+). The protein operates within pyrimidine metabolism; dUMP biosynthesis; dUMP from dCTP (dUTP route): step 2/2. This enzyme is involved in nucleotide metabolism: it produces dUMP, the immediate precursor of thymidine nucleotides and it decreases the intracellular concentration of dUTP so that uracil cannot be incorporated into DNA. This is Deoxyuridine 5'-triphosphate nucleotidohydrolase from Actinobacillus succinogenes (strain ATCC 55618 / DSM 22257 / CCUG 43843 / 130Z).